We begin with the raw amino-acid sequence, 963 residues long: VPS35 endosomal protein-sorting factor-like (963 aa).

The interval 43-69 (SKTKKVNRKGSTSSTSSSSSSSVVDPL) is disordered. Positions 53-69 (STSSTSSSSSSSVVDPL) are enriched in low complexity. Ser265 is subject to Phosphoserine. Residues 703–719 (ACVAYCFITIPSLAGIF) traverse the membrane as a helical segment.

The protein belongs to the VPS35L family. In terms of assembly, component of the heterotrimeric retriever complex formed by VPS26C, VPS29 and VPS35L. Interacts with VPS29. Interacts with COMMD1, CCDC93 and CCDC22; associates with the CCC (COMMD/CCDC22/CCDC93) complex which contains at least COMMD1 (and possibly other COMM domain-containing proteins), CCDC22 and CCDC93. Interacts with WASHC1, WASHC2A and WASHC2C. Interacts with SNX17 and SNX31.

The protein resides in the membrane. The protein localises to the endosome. Acts as a component of the retriever complex. The retriever complex is a heterotrimeric complex related to retromer cargo-selective complex (CSC) and essential for retromer-independent retrieval and recycling of numerous cargos such as integrin alpha-5/beta-1 (ITGA5:ITGB1). The recruitment of the retriever complex to the endosomal membrane involves CCC and WASH complexes. In the endosomes, drives the retrieval and recycling of NxxY-motif-containing cargo proteins by coupling to SNX17, a cargo essential for the homeostatic maintenance of numerous cell surface proteins associated with processes that include cell migration, cell adhesion, nutrient supply and cell signaling. Involved in copper-dependent ATP7A trafficking between the trans-Golgi network and vesicles in the cell periphery; the function is proposed to depend on its association with the CCC complex and cooperation with the WASH complex on early endosomes. Seems not to be required for CCC complex stability. In terms of biological role, (Microbial infection) The heterotrimeric retriever complex, in collaboration with the CCC complex, mediates the exit of human papillomavirus to the cell surface. The sequence is that of VPS35 endosomal protein-sorting factor-like from Homo sapiens (Human).